The following is a 212-amino-acid chain: uncharacterized protein (212 aa).

Transmembrane regions (helical) follow at residues 54-74 (LCFA…GYAG) and 79-99 (WIIC…ALLL).

It is found in the cell membrane. This is an uncharacterized protein from Chlamydia pneumoniae (Chlamydophila pneumoniae).